Reading from the N-terminus, the 339-residue chain is Fructose-1,6-bisphosphatase isozyme 2 (339 aa).

The important for interaction with ALDOA stretch occupies residues 3–10; that stretch reads DRSPFETD. Residues Val-18 and 28–32 each bind AMP; that span reads TGELT. Mg(2+)-binding residues include Asp-69 and Glu-98. AMP is bound at residue 113–114; it reads KY. Residues Asp-119, Leu-121, and Asp-122 each coordinate Mg(2+). Asp-122 is a binding site for substrate. Arg-141 lines the AMP pocket. The Nuclear localization signal signature appears at 204–208; it reads KKKGK. 213–216 is a binding site for substrate; it reads NEGY. Tyr-216 and Tyr-219 each carry phosphotyrosine. Substrate is bound by residues 245–249, Tyr-265, and Lys-275; that span reads YVGSM. Glu-281 contributes to the Mg(2+) binding site.

Belongs to the FBPase class 1 family. In terms of assembly, homotetramer. Interacts with ALDOA; the interaction blocks inhibition by physiological concentrations of AMP and reduces inhibition by Ca(2+). Interacts with alpha-actinin and F-actin. The cofactor is Mg(2+). Expressed in muscle, intestine, brain and placenta and very weakly in liver.

It localises to the cell junction. The protein localises to the cytoplasm. The protein resides in the nucleus. It is found in the myofibril. Its subcellular location is the sarcomere. It localises to the z line. The enzyme catalyses beta-D-fructose 1,6-bisphosphate + H2O = beta-D-fructose 6-phosphate + phosphate. Its pathway is carbohydrate biosynthesis; gluconeogenesis. Subject to complex allosteric regulation. The enzyme can assume an active R-state, or an inactive T-state. Intermediate conformations may exist. AMP acts as an allosteric inhibitor. Fructose 2,6-bisphosphate acts as a competitive inhibitor. Strongly inhibited by Ca(2+). Its function is as follows. Catalyzes the hydrolysis of fructose 1,6-bisphosphate to fructose 6-phosphate in the presence of divalent cations and probably participates in glycogen synthesis from carbohydrate precursors, such as lactate. The sequence is that of Fructose-1,6-bisphosphatase isozyme 2 (Fbp2) from Mus musculus (Mouse).